The chain runs to 787 residues: Serine proteinase stubble (787 aa).

Positions 1–22 (MKQPTLIRPRLRHRRSTPAAAT) are disordered. At 1 to 58 (MKQPTLIRPRLRHRRSTPAAATKMCPKRHWLVNNRAAGSRGSGGAAARSRRSLDQIVE) the chain is on the cytoplasmic side. The helical; Signal-anchor for type II membrane protein transmembrane segment at 59-80 (VLVALIVVNCLATAAAALITPP) threads the bilayer. At 81–787 (DSLESLGSLG…FTPWILEHVR (707 aa)) the chain is on the extracellular side. An N-linked (GlcNAc...) asparagine glycan is attached at N177. The tract at residues 225–516 (AGTLVIRPSG…EISDSSIPDA (292 aa)) is disordered. 5 stretches are compositionally biased toward low complexity: residues 262-280 (SASHPSSSSSSSSSSNPNS), 287-303 (QQQQQQQHQQNQQNHWQ), 358-368 (PSTSTSTTSTS), 393-438 (SLAA…RTTT), and 449-485 (TTATSSSSTSTTSSKTPTTTRPISSSSSSSSGIVTSS). Positions 502 to 512 (GIETNEISDSS) are enriched in polar residues. 2 disulfides stabilise this stretch: C532/C660 and C575/C591. Positions 544–787 (IVGGKSAAFG…FTPWILEHVR (244 aa)) constitute a Peptidase S1 domain. Residues H590 and D640 each act as charge relay system in the active site. N672 carries N-linked (GlcNAc...) asparagine glycosylation. Cystine bridges form between C704–C723 and C734–C763. The active-site Charge relay system is the S738.

This sequence belongs to the peptidase S1 family. Post-translationally, may activate itself by proteolytic cleavage.

It is found in the membrane. Functionally, hormone dependent protease required for epithelial morphogenesis, including the formation of bristles, legs, and wings. Has a dual function, detaches imaginal disk cells from extracellular matrices through its extracellular proteolytic domain and transmits an outside-to-inside signal to its intracellular domain to modify the cytoskeleton during morphogenesis. The sequence is that of Serine proteinase stubble (Sb) from Drosophila melanogaster (Fruit fly).